Consider the following 238-residue polypeptide: Small ribosomal subunit protein uS3 (238 aa).

The region spanning 39–108 (IRKFVKKKLF…NVAVNVIEVK (70 aa)) is the KH type-2 domain.

This sequence belongs to the universal ribosomal protein uS3 family. As to quaternary structure, part of the 30S ribosomal subunit. Forms a tight complex with proteins S10 and S14.

Its function is as follows. Binds the lower part of the 30S subunit head. Binds mRNA in the 70S ribosome, positioning it for translation. The polypeptide is Small ribosomal subunit protein uS3 (Alkaliphilus oremlandii (strain OhILAs) (Clostridium oremlandii (strain OhILAs))).